The following is a 180-amino-acid chain: Insulin-like growth factor 2 (180 aa).

An N-terminal signal peptide occupies residues 1–24; the sequence is MGIPVGKSMLVLLISLAFALCCIA. The segment at 25–52 is b; sequence AYRPSETLCGGELVDTLQFVCSDRGFYF. 3 disulfide bridges follow: Cys-33-Cys-71, Cys-45-Cys-84, and Cys-70-Cys-75. The segment at 53 to 64 is c; it reads SRPSSRANRRSR. The a stretch occupies residues 65-85; that stretch reads GIVEECCFRSCDLALLETYCA. Positions 86-91 are d; sequence TPAKSE. Residues 92-180 constitute a propeptide, e peptide; it reads RDVSTSQAVL…ASSEMSSNHQ (89 aa). The segment at 160 to 180 is disordered; that stretch reads VLPPKDPAHGGASSEMSSNHQ.

This sequence belongs to the insulin family. In terms of assembly, interacts with MYORG; this interaction is required for IGF2 secretion. Interacts with integrins ITGAV:ITGB3 and ITGA6:ITGB4; integrin-binding is required for IGF2 signaling. Interacts with IGFBP2. In terms of processing, proteolytically processed by PCSK4, proIGF2 is cleaved at Arg-128 and Arg-92 to generate big-IGF2 and mature IGF2.

It is found in the secreted. Functionally, the insulin-like growth factors possess growth-promoting activity. Major fetal growth hormone in mammals. Plays a key role in regulating fetoplacental development. IGF2 is influenced by placental lactogen. Also involved in tissue differentiation. In adults, involved in glucose metabolism in adipose tissue, skeletal muscle and liver. Acts as a ligand for integrin which is required for IGF2 signaling. Positively regulates myogenic transcription factor MYOD1 function by facilitating the recruitment of transcriptional coactivators, thereby controlling muscle terminal differentiation. Inhibits myoblast differentiation and modulates metabolism via increasing the mitochondrial respiration rate. Its function is as follows. Preptin undergoes glucose-mediated co-secretion with insulin, and acts as a physiological amplifier of glucose-mediated insulin secretion. Exhibits osteogenic properties by increasing osteoblast mitogenic activity through phosphoactivation of MAPK1 and MAPK3. The chain is Insulin-like growth factor 2 from Rattus norvegicus (Rat).